The primary structure comprises 305 residues: tRNA-cytidine(32) 2-sulfurtransferase (305 aa).

The segment at 1-20 (MTAVLPLPQPLADPAPRDPR) is disordered. The PP-loop motif motif lies at 59–64 (SGGKDS). Positions 134, 137, and 225 each coordinate [4Fe-4S] cluster. Residues 282–305 (DAPSGLDPDPRAWLSAGHATHDSD) form a disordered region.

Belongs to the TtcA family. As to quaternary structure, homodimer. Requires Mg(2+) as cofactor. [4Fe-4S] cluster is required as a cofactor.

The protein localises to the cytoplasm. The catalysed reaction is cytidine(32) in tRNA + S-sulfanyl-L-cysteinyl-[cysteine desulfurase] + AH2 + ATP = 2-thiocytidine(32) in tRNA + L-cysteinyl-[cysteine desulfurase] + A + AMP + diphosphate + H(+). The protein operates within tRNA modification. Its function is as follows. Catalyzes the ATP-dependent 2-thiolation of cytidine in position 32 of tRNA, to form 2-thiocytidine (s(2)C32). The sulfur atoms are provided by the cysteine/cysteine desulfurase (IscS) system. The polypeptide is tRNA-cytidine(32) 2-sulfurtransferase (Xanthomonas axonopodis pv. citri (strain 306)).